A 424-amino-acid chain; its full sequence is Arginine biosynthesis bifunctional protein ArgJ (424 aa).

Residues Thr166, Lys192, Thr203, Glu290, Asn419, and Thr424 each coordinate substrate. Catalysis depends on Thr203, which acts as the Nucleophile.

It belongs to the ArgJ family. As to quaternary structure, heterotetramer of two alpha and two beta chains.

Its subcellular location is the cytoplasm. It catalyses the reaction N(2)-acetyl-L-ornithine + L-glutamate = N-acetyl-L-glutamate + L-ornithine. It carries out the reaction L-glutamate + acetyl-CoA = N-acetyl-L-glutamate + CoA + H(+). It functions in the pathway amino-acid biosynthesis; L-arginine biosynthesis; L-ornithine and N-acetyl-L-glutamate from L-glutamate and N(2)-acetyl-L-ornithine (cyclic): step 1/1. Its pathway is amino-acid biosynthesis; L-arginine biosynthesis; N(2)-acetyl-L-ornithine from L-glutamate: step 1/4. Catalyzes two activities which are involved in the cyclic version of arginine biosynthesis: the synthesis of N-acetylglutamate from glutamate and acetyl-CoA as the acetyl donor, and of ornithine by transacetylation between N(2)-acetylornithine and glutamate. This chain is Arginine biosynthesis bifunctional protein ArgJ, found in Colwellia psychrerythraea (strain 34H / ATCC BAA-681) (Vibrio psychroerythus).